Here is a 51-residue protein sequence, read N- to C-terminus: Large ribosomal subunit protein bL33 (51 aa).

The protein belongs to the bacterial ribosomal protein bL33 family.

This Psychrobacter arcticus (strain DSM 17307 / VKM B-2377 / 273-4) protein is Large ribosomal subunit protein bL33.